Here is a 485-residue protein sequence, read N- to C-terminus: Arginine/agmatine antiporter (485 aa).

12 helical membrane passes run 12–34 (GTIA…SLPQ), 38–60 (ATAG…FFIA), 89–111 (IGFT…YAVI), 126–148 (GGNT…FIVL), 155–177 (SIIN…ILTA), 211–230 (TMLV…VMSG), 243–265 (VLGF…GSLF), 291–313 (VLMN…IIVA), 363–385 (WNTM…AAFL), 400–422 (IKAP…LIYA), 427–446 (YLFM…IDAG), and 461–483 (IVGM…TGRI).

The protein belongs to the amino acid-polyamine-organocation (APC) superfamily. Basic amino acid/polyamine antiporter (APA) (TC 2.A.3.2) family.

It is found in the cell inner membrane. In terms of biological role, catalyzes the exchange of L-arginine for agmatine. The arginine uptake by the bacterium in the macrophage may be a virulence factor against the host innate immune response. This chain is Arginine/agmatine antiporter (aaxC), found in Chlamydia pneumoniae (Chlamydophila pneumoniae).